A 636-amino-acid polypeptide reads, in one-letter code: Chaperone protein DnaK (636 aa).

Position 198 is a phosphothreonine; by autocatalysis (Thr198). The disordered stretch occupies residues 600-636; the sequence is IAQQQAQAQQGSAEAGAQSQEDDVVDAEFEEVKDDKK. Residues 601 to 618 are compositionally biased toward low complexity; it reads AQQQAQAQQGSAEAGAQS. The segment covering 619–636 has biased composition (acidic residues); the sequence is QEDDVVDAEFEEVKDDKK.

It belongs to the heat shock protein 70 family.

In terms of biological role, acts as a chaperone. The chain is Chaperone protein DnaK from Vibrio vulnificus (strain CMCP6).